Reading from the N-terminus, the 432-residue chain is Probable pectate lyase 22 (432 aa).

A signal peptide spans 1–45 (MFRPNSLLIPSNLSTTKSQRNTMLNSSYLSFALIFFCCILFSALA). Asparagine 65 carries N-linked (GlcNAc...) asparagine glycosylation. Ca(2+) contacts are provided by aspartate 228, aspartate 252, and aspartate 256. Arginine 308 is an active-site residue.

This sequence belongs to the polysaccharide lyase 1 family. Requires Ca(2+) as cofactor.

It catalyses the reaction Eliminative cleavage of (1-&gt;4)-alpha-D-galacturonan to give oligosaccharides with 4-deoxy-alpha-D-galact-4-enuronosyl groups at their non-reducing ends.. It functions in the pathway glycan metabolism; pectin degradation; 2-dehydro-3-deoxy-D-gluconate from pectin: step 2/5. In Arabidopsis thaliana (Mouse-ear cress), this protein is Probable pectate lyase 22.